The chain runs to 422 residues: L-threonine dehydratase biosynthetic IlvA (422 aa).

At lysine 56 the chain carries N6-(pyridoxal phosphate)lysine. Pyridoxal 5'-phosphate contacts are provided by residues asparagine 83, 189–193 (GGGGL), and serine 315. The ACT-like domain maps to 339–413 (HYFILNFPQR…FDPSNIYINE (75 aa)).

This sequence belongs to the serine/threonine dehydratase family. Homotetramer. The cofactor is pyridoxal 5'-phosphate.

It catalyses the reaction L-threonine = 2-oxobutanoate + NH4(+). Its pathway is amino-acid biosynthesis; L-isoleucine biosynthesis; 2-oxobutanoate from L-threonine: step 1/1. Catalyzes the anaerobic formation of alpha-ketobutyrate and ammonia from threonine in a two-step reaction. The first step involved a dehydration of threonine and a production of enamine intermediates (aminocrotonate), which tautomerizes to its imine form (iminobutyrate). Both intermediates are unstable and short-lived. The second step is the nonenzymatic hydrolysis of the enamine/imine intermediates to form 2-ketobutyrate and free ammonia. In the low water environment of the cell, the second step is accelerated by RidA. The chain is L-threonine dehydratase biosynthetic IlvA (ilvA) from Staphylococcus aureus (strain MSSA476).